The following is a 408-amino-acid chain: Putative F-box protein At1g53550 (408 aa).

One can recognise an F-box domain in the interval 29 to 74; it reads TCYFDPIPVDLVINILSRLSLECIARCRCVSKLWSSIIRRPNYNQL.

This is Putative F-box protein At1g53550 from Arabidopsis thaliana (Mouse-ear cress).